The following is a 248-amino-acid chain: Adenosylcobinamide-GDP ribazoletransferase (248 aa).

Transmembrane regions (helical) follow at residues 36-56 (FFLPVVAFIIGGMEFLIYLGL), 59-79 (FLPANVIIVLLILFTAMITGG), 114-134 (GTIALIIDLLLKYQLLYSLVL), 137-157 (YSIAIVLAPIIGRISILFLCL), 170-190 (IFIGNMSKPIIFFITTIVLVL), and 199-219 (ATIIPFIGVLLITYLLYLLCL).

The protein belongs to the CobS family. Mg(2+) serves as cofactor.

The protein localises to the cell membrane. It catalyses the reaction alpha-ribazole + adenosylcob(III)inamide-GDP = adenosylcob(III)alamin + GMP + H(+). The enzyme catalyses alpha-ribazole 5'-phosphate + adenosylcob(III)inamide-GDP = adenosylcob(III)alamin 5'-phosphate + GMP + H(+). The protein operates within cofactor biosynthesis; adenosylcobalamin biosynthesis; adenosylcobalamin from cob(II)yrinate a,c-diamide: step 7/7. Joins adenosylcobinamide-GDP and alpha-ribazole to generate adenosylcobalamin (Ado-cobalamin). Also synthesizes adenosylcobalamin 5'-phosphate from adenosylcobinamide-GDP and alpha-ribazole 5'-phosphate. This is Adenosylcobinamide-GDP ribazoletransferase from Clostridium botulinum (strain Langeland / NCTC 10281 / Type F).